The chain runs to 262 residues: DNA repair protein RecO (262 aa).

The protein belongs to the RecO family.

In terms of biological role, involved in DNA repair and RecF pathway recombination. The sequence is that of DNA repair protein RecO from Acidovorax ebreus (strain TPSY) (Diaphorobacter sp. (strain TPSY)).